Reading from the N-terminus, the 249-residue chain is Imidazole glycerol phosphate synthase subunit HisF (249 aa).

Catalysis depends on residues Asp-11 and Asp-130.

Belongs to the HisA/HisF family. As to quaternary structure, heterodimer of HisH and HisF.

It is found in the cytoplasm. The enzyme catalyses 5-[(5-phospho-1-deoxy-D-ribulos-1-ylimino)methylamino]-1-(5-phospho-beta-D-ribosyl)imidazole-4-carboxamide + L-glutamine = D-erythro-1-(imidazol-4-yl)glycerol 3-phosphate + 5-amino-1-(5-phospho-beta-D-ribosyl)imidazole-4-carboxamide + L-glutamate + H(+). It participates in amino-acid biosynthesis; L-histidine biosynthesis; L-histidine from 5-phospho-alpha-D-ribose 1-diphosphate: step 5/9. In terms of biological role, IGPS catalyzes the conversion of PRFAR and glutamine to IGP, AICAR and glutamate. The HisF subunit catalyzes the cyclization activity that produces IGP and AICAR from PRFAR using the ammonia provided by the HisH subunit. The protein is Imidazole glycerol phosphate synthase subunit HisF of Exiguobacterium sibiricum (strain DSM 17290 / CCUG 55495 / CIP 109462 / JCM 13490 / 255-15).